Reading from the N-terminus, the 274-residue chain is tRNA-cytidine(32) 2-sulfurtransferase (274 aa).

The PP-loop motif motif lies at 40 to 45 (SGGKDS). [4Fe-4S] cluster is bound by residues cysteine 115, cysteine 118, and cysteine 206.

It belongs to the TtcA family. Homodimer. Requires Mg(2+) as cofactor. [4Fe-4S] cluster is required as a cofactor.

It is found in the cytoplasm. The catalysed reaction is cytidine(32) in tRNA + S-sulfanyl-L-cysteinyl-[cysteine desulfurase] + AH2 + ATP = 2-thiocytidine(32) in tRNA + L-cysteinyl-[cysteine desulfurase] + A + AMP + diphosphate + H(+). Its pathway is tRNA modification. Its function is as follows. Catalyzes the ATP-dependent 2-thiolation of cytidine in position 32 of tRNA, to form 2-thiocytidine (s(2)C32). The sulfur atoms are provided by the cysteine/cysteine desulfurase (IscS) system. This is tRNA-cytidine(32) 2-sulfurtransferase from Stutzerimonas stutzeri (strain A1501) (Pseudomonas stutzeri).